The chain runs to 104 residues: Circadian clock oscillator protein KaiB (104 aa).

Belongs to the KaiB family. The KaiABC complex composition changes during the circadian cycle to control KaiC phosphorylation. Complexes KaiC(6), KaiA(2-4):KaiC(6), KaiB(6):KaiC(6) and KaiC(6):KaiB(6):KaiA(12) are among the most important forms, many form cooperatively. Undergoes a major conformational rearrangment; in the free state forms homotetramers as a dimer of dimers. When bound to the CI domain of KaiC switches to a monomeric thioredoxin-fold (KaiB(fs)). KaiB(fs) binds CikA, leading it to dephosphorylate phospho-RpaA.

Its function is as follows. Key component of the KaiABC oscillator complex, which constitutes the main circadian regulator in cyanobacteria. Complex composition changes during the circadian cycle to control KaiC phosphorylation. KaiA stimulates KaiC autophosphorylation, while KaiB sequesters KaiA, leading to KaiC autodephosphorylation. Phospho-Ser-431 KaiC accumulation triggers binding of KaiB to form the KaiB(6):KaiC(6) complex, leading to changes in output regulators CikA and SasA. KaiB switches to a thioredoxin-like fold (KaiB(fs)) when bound to KaiC. KaiB(6):KaiC(6) formation exposes a site for KaiA binding that sequesters KaiA from KaiC, making the KaiC(6):KaiB(6):KaiA(12) complex that results in KaiC autodephosphorylation. In terms of biological role, a metamorphic protein which reversibly switches between an inactive tetrameric fold and a rare, thioredoxin-like monomeric fold (KaiB(fs)). KaiB(fs) binds phospho-KaiC, KaiA and CikA. KaiA and CikA compete for binding to KaiB(fs), and KaiB(fs) and SasA compete for binding to KaiC, thus the clock oscillator and output signal pathway are tightly coupled. This Picosynechococcus sp. (strain ATCC 27264 / PCC 7002 / PR-6) (Agmenellum quadruplicatum) protein is Circadian clock oscillator protein KaiB.